Consider the following 211-residue polypeptide: Ribosomal RNA small subunit methyltransferase G (211 aa).

Residues Gly76, Leu81, 127–128, and Arg142 each bind S-adenosyl-L-methionine; that span reads VE.

The protein belongs to the methyltransferase superfamily. RNA methyltransferase RsmG family.

It localises to the cytoplasm. It catalyses the reaction guanosine(527) in 16S rRNA + S-adenosyl-L-methionine = N(7)-methylguanosine(527) in 16S rRNA + S-adenosyl-L-homocysteine. Its function is as follows. Specifically methylates the N7 position of guanine in position 527 of 16S rRNA. The protein is Ribosomal RNA small subunit methyltransferase G of Vibrio vulnificus (strain CMCP6).